We begin with the raw amino-acid sequence, 772 residues long: Heat shock protein 88 (772 aa).

Disordered regions lie at residues 496-519 (TAAP…AEEK) and 729-772 (LGKP…DILD). A compositionally biased stretch (low complexity) spans 497-513 (AAPAETPAETPANGEAA). Positions 735–772 (KPVEVPKEEPKDTPMESKDAPAEEPVATKDQKMDDILD) are enriched in basic and acidic residues.

The protein belongs to the heat shock protein 70 family.

Its function is as follows. May function in protein folding and assembly, and disassembly of protein complexes. This is Heat shock protein 88 (hspH) from Dictyostelium discoideum (Social amoeba).